We begin with the raw amino-acid sequence, 128 residues long: Small ribosomal subunit protein bS6 (128 aa).

The protein belongs to the bacterial ribosomal protein bS6 family.

Its function is as follows. Binds together with bS18 to 16S ribosomal RNA. The polypeptide is Small ribosomal subunit protein bS6 (Nitratiruptor sp. (strain SB155-2)).